Here is a 180-residue protein sequence, read N- to C-terminus: Adenine phosphoribosyltransferase (180 aa).

N-acetylalanine is present on A2. Phosphoserine occurs at positions 4, 15, and 30. Phosphotyrosine is present on Y60. Phosphoserine is present on S66. Position 114 is an N6-acetyllysine (K114). Phosphothreonine is present on T135.

Belongs to the purine/pyrimidine phosphoribosyltransferase family. Homodimer.

The protein localises to the cytoplasm. It carries out the reaction AMP + diphosphate = 5-phospho-alpha-D-ribose 1-diphosphate + adenine. The protein operates within purine metabolism; AMP biosynthesis via salvage pathway; AMP from adenine: step 1/1. In terms of biological role, catalyzes a salvage reaction resulting in the formation of AMP, that is energically less costly than de novo synthesis. The protein is Adenine phosphoribosyltransferase of Cricetulus griseus (Chinese hamster).